The chain runs to 294 residues: Nucleotide-binding protein CLL_A3342 (294 aa).

Residue Gly8–Thr15 coordinates ATP. Residue Asp59–Gly62 participates in GTP binding.

This sequence belongs to the RapZ-like family.

Functionally, displays ATPase and GTPase activities. This is Nucleotide-binding protein CLL_A3342 from Clostridium botulinum (strain Eklund 17B / Type B).